We begin with the raw amino-acid sequence, 280 residues long: Pre-mRNA-splicing factor PRP21 (280 aa).

Residues 11–49 form an SURP motif 1 repeat; it reads DIKTTVNYIKQHGVEFENKLLEDERFSFIKKDDPLHEYY. Residues 53–72 are disordered; that stretch reads MNEPTDTVSGEDNDRKSERE. An SURP motif 2 repeat occupies 95 to 135; it reads VIKLTARYYAKDKSIVEQMISKDGEARLNFMNSSHPLHKTF. 2 stretches are compositionally biased toward basic and acidic residues: residues 246–261 and 269–280; these read EKIV…GDSK and AVGETRLKKSKK. A disordered region spans residues 246–280; sequence EKIVSDQGKQKGGDSKGKKRKIRAVGETRLKKSKK.

As to quaternary structure, belongs to the CWC complex (or CEF1-associated complex), a spliceosome sub-complex reminiscent of a late-stage spliceosome composed of the U2, U5 and U6 snRNAs and at least BUD13, BUD31, BRR2, CDC40, CEF1, CLF1, CUS1, CWC2, CWC15, CWC21, CWC22, CWC23, CWC24, CWC25, CWC27, ECM2, HSH155, IST3, ISY1, LEA1, MSL1, NTC20, PRP8, PRP9, PRP11, PRP19, PRP21, PRP22, PRP45, PRP46, SLU7, SMB1, SMD1, SMD2, SMD3, SMX2, SMX3, SNT309, SNU114, SPP2, SYF1, SYF2, RSE1 and YJU2.

The protein localises to the nucleus. Functionally, mRNA splicing factors, PRP9, PRP11, and PRP21, are necessary for binding of the U2 snRNP to the pre-mRNA in an early step of spliceosome assembly. This is Pre-mRNA-splicing factor PRP21 (PRP21) from Saccharomyces cerevisiae (strain ATCC 204508 / S288c) (Baker's yeast).